We begin with the raw amino-acid sequence, 179 residues long: uncharacterized protein (179 aa).

Residues M1 to R32 form a disordered region.

This is an uncharacterized protein from Homo sapiens (Human).